The chain runs to 171 residues: Putative ankyrin repeat protein PA3287 (171 aa).

3 ANK repeats span residues 48–77 (KGDS…DPDL), 81–110 (AGQT…DVEG), and 114–143 (DGKT…RRDA).

The polypeptide is Putative ankyrin repeat protein PA3287 (Pseudomonas aeruginosa (strain ATCC 15692 / DSM 22644 / CIP 104116 / JCM 14847 / LMG 12228 / 1C / PRS 101 / PAO1)).